Consider the following 256-residue polypeptide: POU domain class 2-associating factor 1 (256 aa).

The interval methionine 1–arginine 23 is disordered. Residues proline 16–histidine 38 form the OCA domain.

It belongs to the POU2AF family. As to quaternary structure, interacts with POU2F1/OCT1 and POU2F2/OCT2; the interaction increases POU2F1 and POU2F2 transactivation activity. Ubiquitinated; mediated by SIAH1 or SIAH2 and leading to its subsequent proteasomal degradation.

Its subcellular location is the nucleus. Its function is as follows. Transcriptional coactivator that specifically associates with either POU2F1/OCT1 or POU2F2/OCT2. It boosts the POU2F1/OCT1 mediated promoter activity and to a lesser extent, that of POU2F2/OCT2. It recognizes the POU domains of POU2F1/OCT1 and POU2F2/OCT2. It is essential for the response of B-cells to antigens and required for the formation of germinal centers. Regulates IL6 expression in B cells as POU2F2/OCT2 coactivator. This is POU domain class 2-associating factor 1 (POU2AF1) from Bos taurus (Bovine).